A 318-amino-acid chain; its full sequence is Biotin synthase (318 aa).

Residues 40–260 (DDIQKASLLS…VATARIIMPL (221 aa)) form the Radical SAM core domain. Positions 55, 59, and 62 each coordinate [4Fe-4S] cluster. [2Fe-2S] cluster is bound by residues C100, C132, C192, and R264.

This sequence belongs to the radical SAM superfamily. Biotin synthase family. Homodimer. Requires [4Fe-4S] cluster as cofactor. [2Fe-2S] cluster is required as a cofactor.

It catalyses the reaction (4R,5S)-dethiobiotin + (sulfur carrier)-SH + 2 reduced [2Fe-2S]-[ferredoxin] + 2 S-adenosyl-L-methionine = (sulfur carrier)-H + biotin + 2 5'-deoxyadenosine + 2 L-methionine + 2 oxidized [2Fe-2S]-[ferredoxin]. It functions in the pathway cofactor biosynthesis; biotin biosynthesis; biotin from 7,8-diaminononanoate: step 2/2. Its function is as follows. Catalyzes the conversion of dethiobiotin (DTB) to biotin by the insertion of a sulfur atom into dethiobiotin via a radical-based mechanism. The polypeptide is Biotin synthase (Ruegeria pomeroyi (strain ATCC 700808 / DSM 15171 / DSS-3) (Silicibacter pomeroyi)).